A 589-amino-acid polypeptide reads, in one-letter code: Serine/threonine-protein kinase shk2 (589 aa).

A PH domain is found at 23-125 (GIIRSGWVML…WMDLISSRAL (103 aa)). The 14-residue stretch at 129-142 (VSSPMNPKHQVHVG) folds into the CRIB domain. In terms of domain architecture, Protein kinase spans 309–566 (FNVKHKLGQG…AAELLTHSFL (258 aa)). Residues 315–323 (LGQGASGSV) and K343 each bind ATP. The active-site Proton acceptor is the D434.

Belongs to the protein kinase superfamily. STE Ser/Thr protein kinase family. STE20 subfamily.

The enzyme catalyses L-seryl-[protein] + ATP = O-phospho-L-seryl-[protein] + ADP + H(+). The catalysed reaction is L-threonyl-[protein] + ATP = O-phospho-L-threonyl-[protein] + ADP + H(+). Functionally, forms an activated complex with GTP-bound Ras-like cdc42. Participates in Ras-dependent morphological control and mating response pathways. The protein is Serine/threonine-protein kinase shk2 (shk2) of Schizosaccharomyces pombe (strain 972 / ATCC 24843) (Fission yeast).